A 392-amino-acid polypeptide reads, in one-letter code: Alpha-(1,3)-fucosyltransferase fut-6 (392 aa).

At 1–12 (MSQIGGATCTWR) the chain is on the cytoplasmic side. Residues 13–35 (YLGRFVTLGIYASVALFVWYTLV) traverse the membrane as a helical; Signal-anchor for type II membrane protein segment. Over 36–392 (PTRSKHKDSI…CNNQIASKYL (357 aa)) the chain is Lumenal. Asn-158 carries an N-linked (GlcNAc...) asparagine glycan.

It belongs to the glycosyltransferase 10 family. The cofactor is Unlike other alpha-(1,3)-fucosyltransferases, appears not to require a divalent metal cation as cofactor..

The protein localises to the golgi apparatus. Its subcellular location is the golgi stack membrane. Its pathway is protein modification; protein glycosylation. Inhibited by divalent metal cations. Involved in the fucosylation of N-glycans. Preferentially catalyzes the addition of fucose in alpha 1-3 linkage to the distal GlcNAc residue in N-glycans. Catalyzes the transfer of fucose to Gal-beta-1-4-GlcNAc-alpha-pNP (LN-pNP) and Gal-beta-1-4-GlcNAc-beta-1-3-Gal-beta-1-4-Glc (LNnT). Unlike alpha-(1,3)-fucosyltransferase fut-1, does not transfer fucose to Man-alpha-1-3-(Man-alpha-1-6)-Man-beta-1-4-GlcNAc-beta-1-4-GlcNAc-beta-1-Asn (M3), Man-alpha-1-3-(Man-alpha-1-6)-Man-beta-1-4-GlcNAc-beta-1-4-(Fuc-alpha-1-6)-GlcNAc-beta-1-Asn (M3F6) and GlcNAc-beta-1-2-Man-alpha-1-3-(GlcNAc-beta-1-2-Man-alpha-1-6)-Man-beta-1-4-GlcNAc-beta-1-4(Fuc-alpha-1-6)-GlcNAc-beta-1-Asn (GnM3F6). This Caenorhabditis elegans protein is Alpha-(1,3)-fucosyltransferase fut-6.